Consider the following 170-residue polypeptide: Transcriptional repressor NrdR (170 aa).

Residues 3-34 (CPFCGTQDTKVVDSRLVSEGAQVRRRRTCIHC) fold into a zinc finger. The ATP-cone domain maps to 49 to 139 (PKLIKSDGSR…VYRSFKDISE (91 aa)). A disordered region spans residues 151 to 170 (SVSIPKSKKTAPESKKEDQA). A compositionally biased stretch (basic and acidic residues) spans 160–170 (TAPESKKEDQA).

The protein belongs to the NrdR family. Zn(2+) serves as cofactor.

Its function is as follows. Negatively regulates transcription of bacterial ribonucleotide reductase nrd genes and operons by binding to NrdR-boxes. This chain is Transcriptional repressor NrdR, found in Marinomonas sp. (strain MWYL1).